The sequence spans 405 residues: Tyrosine--tRNA ligase (405 aa).

A 'HIGH' region motif is present at residues Pro-48–His-57. The 'KMSKS' region signature appears at Lys-232–Ser-236. Lys-235 serves as a coordination point for ATP. An S4 RNA-binding domain is found at Ile-343–Phe-404.

It belongs to the class-I aminoacyl-tRNA synthetase family. TyrS type 2 subfamily. In terms of assembly, homodimer.

It is found in the cytoplasm. It carries out the reaction tRNA(Tyr) + L-tyrosine + ATP = L-tyrosyl-tRNA(Tyr) + AMP + diphosphate + H(+). Catalyzes the attachment of tyrosine to tRNA(Tyr) in a two-step reaction: tyrosine is first activated by ATP to form Tyr-AMP and then transferred to the acceptor end of tRNA(Tyr). The chain is Tyrosine--tRNA ligase from Desulfotalea psychrophila (strain LSv54 / DSM 12343).